An 824-amino-acid chain; its full sequence is Lon protease (824 aa).

Residues 1–23 (MNEPMSLFDDLPEEHDEPQEAPE) form a disordered region. Over residues 10–20 (DLPEEHDEPQE) the composition is skewed to acidic residues. One can recognise a Lon N-terminal domain in the interval 26 to 222 (LPMVVLGEMV…KVYLVLARQL (197 aa)). An ATP-binding site is contributed by 375–382 (GPPGVGKT). One can recognise a Lon proteolytic domain in the interval 617–798 (QDEVGVATGV…DEVLRIALSR (182 aa)). Active-site residues include S704 and K747. Positions 800–824 (PTPANNQNGSHTNNRGQPSPAPAGT) are disordered. Over residues 802-816 (PANNQNGSHTNNRGQ) the composition is skewed to polar residues.

Belongs to the peptidase S16 family. In terms of assembly, homohexamer. Organized in a ring with a central cavity.

Its subcellular location is the cytoplasm. It carries out the reaction Hydrolysis of proteins in presence of ATP.. ATP-dependent serine protease that mediates the selective degradation of mutant and abnormal proteins as well as certain short-lived regulatory proteins. Required for cellular homeostasis and for survival from DNA damage and developmental changes induced by stress. Degrades polypeptides processively to yield small peptide fragments that are 5 to 10 amino acids long. Binds to DNA in a double-stranded, site-specific manner. The sequence is that of Lon protease from Chloroflexus aggregans (strain MD-66 / DSM 9485).